Reading from the N-terminus, the 532-residue chain is MLDNLKKDIETKLFNAEVFEGAVLPPVDLTPAPPHTGADISLTWAMSAAKTLKKNPLEIAKAAVKVISEVTFVASASYAAPGFINIILEDSFISSSALDRRLKNRKTAGENKERVLIEFVSANPTGPLHVASGRGASLGDSLVRIFNALGIQCDSEYYVNDSGNQAMLLGVSLKARVNGQEPPENGYHGSYLIEMADEIREMSKDWTEEQFSIYAIEYLIKTHQRDMQAFNVNFTRWFRESELYKESLPAKALDFLKEKGLAYEADGAVWFGTTKDNDDKDRVLVRADGRPTYFLADIAYHKNKYDRGFTTLVDILGADHHGYVPRMKAAVKALGENEESFVPIIHQLVHLIEGGEKVKMSKRSGRFITLKELTEEVGADACRFLFASRTPDAHMNFDIDLAKKRTNENPVFYVQYVHARAASIARMAEQKHLQQAENLVDFKLTPQERTLLIKILWFKHALKNCVRDMSPHHLTTYLIELAGNFHSFYDACRVVDEDNPQTTAHRLLICDRVRERIKKGLEFLGVSAPEEM.

The 'HIGH' region signature appears at 122-132; it reads ANPTGPLHVAS.

This sequence belongs to the class-I aminoacyl-tRNA synthetase family. In terms of assembly, monomer.

The protein localises to the cytoplasm. The enzyme catalyses tRNA(Arg) + L-arginine + ATP = L-arginyl-tRNA(Arg) + AMP + diphosphate. The chain is Arginine--tRNA ligase from Elusimicrobium minutum (strain Pei191).